Here is a 615-residue protein sequence, read N- to C-terminus: Sodium-dependent noradrenaline transporter (615 aa).

Residues 1-28 are disordered; that stretch reads MLLARMNPQVQPENGGAGPGSEQPPRKR. Topologically, residues 1–60 are cytoplasmic; the sequence is MLLARMNPQVQPENGGAGPGSEQPPRKRKEVLVVKERNGVQCLLASRDGDEQPRETWGKK. The helical transmembrane segment at 61–86 threads the bilayer; the sequence is IDFLLSVVGFAVDLANVWRFPYLCYK. Residues glycine 69, alanine 71, and valine 72 each coordinate Na(+). Residue aspartate 73 coordinates (R)-noradrenaline. Aspartate 73 contacts dopamine. Asparagine 76 serves as a coordination point for Na(+). Residues tyrosine 85 and lysine 86 each contribute to the (R)-noradrenaline site. Topologically, residues 87–90 are extracellular; it reads NGGG. A helical transmembrane segment spans residues 91–114; that stretch reads AFLIPYTLFLIIAGMPLFYMELAL. The Cytoplasmic portion of the chain corresponds to 115-133; the sequence is GQYNREGAATVWKICPFFK. A helical transmembrane segment spans residues 134 to 164; the sequence is GVGYAVILIALYVGFYYNVIIAWSLYYLFSS. The (R)-noradrenaline site is built by alanine 143 and glycine 147. Alanine 143 contacts dopamine. Residues 165-231 lie on the Extracellular side of the membrane; it reads FTPTLPWTDC…SSGIHDIGLP (67 aa). Residues cysteine 174 and cysteine 183 are joined by a disulfide bond. Residues asparagine 182, asparagine 190, and asparagine 196 are each glycosylated (N-linked (GlcNAc...) asparagine). The helical transmembrane segment at 232–252 threads the bilayer; it reads QWQLLLCLIIVVIVLFFSLWK. The Cytoplasmic portion of the chain corresponds to 253-255; the sequence is GVK. Residues 256–280 form a helical membrane-spanning segment; it reads TSGKVVWITATLPYLVLFVLLVHGI. Over 281–304 the chain is Extracellular; the sequence is TLPGASNGINAYLHIDFYRLKEAT. The chain crosses the membrane as a helical span at residues 305 to 330; that stretch reads VWIDAATQIFFSLGAGFGVLIAFASY. Residue phenylalanine 315 coordinates (R)-noradrenaline. A dopamine-binding site is contributed by phenylalanine 315. Residue serine 316 coordinates Na(+). Residues 331 to 336 are Cytoplasmic-facing; that stretch reads NKFDNN. Residues 337 to 360 traverse the membrane as a helical segment; sequence CYRDALLTSTINCVTSFISGFAIF. Asparagine 348 provides a ligand contact to Na(+). Residues 361-400 are Extracellular-facing; it reads SILGYMAHEHKVNIEDVATEGAGLVFILYPEAISTLSGST. Glutamate 380 provides a ligand contact to (R)-noradrenaline. Position 380 (glutamate 380) interacts with dopamine. A helical transmembrane segment spans residues 401 to 426; it reads FWAIVFFIMLLALGIDSSMGGMEAVI. Na(+)-binding residues include aspartate 416 and serine 417. The Cytoplasmic segment spans residues 427-441; sequence TGLADDFQVLKRHRK. Residues 442–462 form a helical membrane-spanning segment; that stretch reads LFTFAVSFGTFLLALFCITKG. Glycine 463 is a topological domain (extracellular). The chain crosses the membrane as a helical span at residues 464-490; that stretch reads IYVLTLLDTFAAGTSILFAVLMEAIGV. Over 491-520 the chain is Cytoplasmic; the sequence is SWFYGVDRFSNDIQQMMGFKPGLYWRLCWK. Residues 521-543 form a helical membrane-spanning segment; it reads FVSPAFLLFVVIVSIINFKPLTY. Residues 544–546 are Extracellular-facing; sequence DDY. The chain crosses the membrane as a helical span at residues 547–567; the sequence is IFPLWANWVGWGIAGSSMVLV. Residues 568–615 lie on the Cytoplasmic side of the membrane; it reads PAYIVYKFFSTRGSIRERLAYGITPASEHHLVAQRDIRQFQLQHWLAI.

Belongs to the sodium:neurotransmitter symporter (SNF) (TC 2.A.22) family. SLC6A2 subfamily. In terms of assembly, monomer. Can form homodimers in the cell membrane; homodimerization is mostly mediated by cholesterol and lipids, and regulates neurotransmitter transport activity. Interacts with PRKCABP. Palmitoylated. Palmitoylation regulates protein levels and neurotransmitter transport.

It localises to the cell membrane. It is found in the cell projection. The protein resides in the axon. The protein localises to the synapse. Its subcellular location is the synaptosome. It catalyses the reaction (R)-noradrenaline(out) + chloride(out) + Na(+)(out) = (R)-noradrenaline(in) + chloride(in) + Na(+)(in). It carries out the reaction dopamine(out) + chloride(out) + Na(+)(out) = dopamine(in) + chloride(in) + Na(+)(in). The catalysed reaction is dopamine(out) + chloride(out) + 2 Na(+)(out) = dopamine(in) + chloride(in) + 2 Na(+)(in). With respect to regulation, inhibited by nisoxetine, oxaprotiline and desipramin. Mediates sodium- and chloride-dependent transport of norepinephrine (also known as noradrenaline), the primary signaling neurotransmitter in the autonomic sympathetic nervous system. Is responsible for norepinephrine re-uptake and clearance from the synaptic cleft, thus playing a crucial role in norepinephrine inactivation and homeostasis. Can also mediate sodium- and chloride-dependent transport of dopamine. In Bos taurus (Bovine), this protein is Sodium-dependent noradrenaline transporter (SLC6A2).